Consider the following 208-residue polypeptide: Cytochrome c biogenesis ATP-binding export protein CcmA (208 aa).

Positions 3–206 (LSGKDLAAHR…LEKFVPSQER (204 aa)) constitute an ABC transporter domain. 35–42 (GPNGIGKS) contributes to the ATP binding site.

This sequence belongs to the ABC transporter superfamily. CcmA exporter (TC 3.A.1.107) family. The complex is composed of two ATP-binding proteins (CcmA) and two transmembrane proteins (CcmB).

The protein resides in the cell inner membrane. The enzyme catalyses heme b(in) + ATP + H2O = heme b(out) + ADP + phosphate + H(+). Functionally, part of the ABC transporter complex CcmAB involved in the biogenesis of c-type cytochromes; once thought to export heme, this seems not to be the case, but its exact role is uncertain. Responsible for energy coupling to the transport system. The polypeptide is Cytochrome c biogenesis ATP-binding export protein CcmA (Bartonella quintana (strain Toulouse) (Rochalimaea quintana)).